A 462-amino-acid chain; its full sequence is Anthranilate synthase component 1 (462 aa).

Residues Ser46 and 243 to 245 (PHM) each bind L-tryptophan. A chorismate-binding site is contributed by 278 to 279 (GT). Glu305 is a Mg(2+) binding site. Chorismate contacts are provided by residues Tyr394, Arg414, 428-430 (SGG), and Gly430. Glu444 is a binding site for Mg(2+).

This sequence belongs to the anthranilate synthase component I family. Heterotetramer consisting of two non-identical subunits: a beta subunit (TrpG) and a large alpha subunit (TrpE). The cofactor is Mg(2+).

The enzyme catalyses chorismate + L-glutamine = anthranilate + pyruvate + L-glutamate + H(+). The protein operates within amino-acid biosynthesis; L-tryptophan biosynthesis; L-tryptophan from chorismate: step 1/5. Feedback inhibited by tryptophan. Part of a heterotetrameric complex that catalyzes the two-step biosynthesis of anthranilate, an intermediate in the biosynthesis of L-tryptophan. In the first step, the glutamine-binding beta subunit (TrpG) of anthranilate synthase (AS) provides the glutamine amidotransferase activity which generates ammonia as a substrate that, along with chorismate, is used in the second step, catalyzed by the large alpha subunit of AS (TrpE) to produce anthranilate. In the absence of TrpG, TrpE can synthesize anthranilate directly from chorismate and high concentrations of ammonia. This Leptospira biflexa protein is Anthranilate synthase component 1 (trpE).